Here is a 192-residue protein sequence, read N- to C-terminus: Leucine-rich repeat-containing protein 51 (192 aa).

LRR repeat units lie at residues 49-71, 80-101, and 103-124; these read SLTQ…NQVV, NLAW…LTTF, and NLSV…NKLA. The region spanning 137–175 is the LRRCT domain; the sequence is NPIEEEKGYRQYVLCNLPRITTFDFSGVTRADRSTAEVW.

Widely expressed in adult and embryonic tissues. Expressed in the developing choroid plexus from 12.5 dpc and in the epithelium of the developing airway tract from 14.5 dpc. Also expressed in the postnatal inner ear.

It is found in the cytoplasm. This chain is Leucine-rich repeat-containing protein 51, found in Mus musculus (Mouse).